We begin with the raw amino-acid sequence, 319 residues long: Tetrahydromethanopterin S-methyltransferase subunit H (319 aa).

Belongs to the MtrH family. The complex is composed of 8 subunits; MtrA, MtrB, MtrC, MtrD, MtrE, MtrF, MtrG and MtrH.

It catalyses the reaction 5-methyl-5,6,7,8-tetrahydromethanopterin + coenzyme M + 2 Na(+)(in) = 5,6,7,8-tetrahydromethanopterin + methyl-coenzyme M + 2 Na(+)(out). It functions in the pathway one-carbon metabolism; methanogenesis from CO(2); methyl-coenzyme M from 5,10-methylene-5,6,7,8-tetrahydromethanopterin: step 2/2. Part of a complex that catalyzes the formation of methyl-coenzyme M and tetrahydromethanopterin from coenzyme M and methyl-tetrahydromethanopterin. This is an energy-conserving, sodium-ion translocating step. MtrH catalyzes the transfer of the methyl group from methyl-tetrahydromethanopterin to the corrinoid prosthetic group of MtrA. The sequence is that of Tetrahydromethanopterin S-methyltransferase subunit H from Methanococcus vannielii (strain ATCC 35089 / DSM 1224 / JCM 13029 / OCM 148 / SB).